Here is a 175-residue protein sequence, read N- to C-terminus: Large ribosomal subunit protein bL17 (175 aa).

The segment at 124-175 is disordered; sequence VKKSKPTAPAQAVATKPAVEETREAAAAQPQEPEVEISEVKDPAEECEAKAD. Basic and acidic residues predominate over residues 161-175; sequence SEVKDPAEECEAKAD.

It belongs to the bacterial ribosomal protein bL17 family. Part of the 50S ribosomal subunit. Contacts protein L32.

The polypeptide is Large ribosomal subunit protein bL17 (Geobacter sulfurreducens (strain ATCC 51573 / DSM 12127 / PCA)).